The following is a 184-amino-acid chain: MEDYKAFLDEKMSKVLLSLDNEYKTLRTGRISSNVFDKIFIQYHGQKTPITQVSSIRIPEARLVVIQPWDKTILNKIEQAILNSDLSMNPSSDGSVIRIKVPALTSERRQDIVKHAKKIAEEHKVSTRNIRQDLNNKVKKQEKESEITEDSLKRILDDIQKSIDIYIKRIDTILESKIQEIMEV.

The protein belongs to the RRF family.

Its subcellular location is the cytoplasm. Functionally, responsible for the release of ribosomes from messenger RNA at the termination of protein biosynthesis. May increase the efficiency of translation by recycling ribosomes from one round of translation to another. The chain is Ribosome-recycling factor from Borrelia garinii subsp. bavariensis (strain ATCC BAA-2496 / DSM 23469 / PBi) (Borreliella bavariensis).